The sequence spans 190 residues: Lipocalin Can f 6.0101 (190 aa).

Positions 1–15 (MKLLLLCLGLILVHA) are cleaved as a signal peptide. Residues 43–54 (SDIKEKIEENGS) form an igE-binding region. Asn-52 and Asn-67 each carry an N-linked (GlcNAc...) asparagine glycan. An igE-binding region spans residues 76-83 (TKVNGKCT). Cys-82 and Cys-175 are oxidised to a cystine. A glycan (N-linked (GlcNAc...) asparagine) is linked at Asn-90. The interval 91–97 (KTEKDGE) is igE-binding. The segment at 100-109 (VVHDGYNLFR) is no IgE-binding. 2 igE-binding regions span residues 125–132 (NVNQEQEF) and 139–152 (GRKP…KEKF).

The protein belongs to the calycin superfamily. Lipocalin family. In terms of assembly, monomer. Expressed in saliva (at protein level). Expressed in dander (at protein level). According to PubMed:22104604, expressed in submaxillary gland. In contrast, according to PubMed:22515174, not expressed in submaxillary gland. Expressed in bladder and skin, but not in tongue.

It localises to the secreted. The polypeptide is Lipocalin Can f 6.0101 (Canis lupus familiaris (Dog)).